Here is a 479-residue protein sequence, read N- to C-terminus: mRNA export factor ICP27 homolog (479 aa).

Over residues 1–15 (MVPSQRLSRTSSISS) the composition is skewed to low complexity. Disordered regions lie at residues 1-78 (MVPS…SSVV) and 92-210 (KWDL…NKPW). Residues 35 to 44 (TDCDMDPMEG) show a composition bias toward acidic residues. Basic and acidic residues predominate over residues 132–142 (EVHGCTDESYG). Zn(2+) contacts are provided by Cys-354, His-445, Cys-449, and Cys-454. Residues 354-454 (CFLPNTRDYN…HTRDCRSASC (101 aa)) form a CHC2-type zinc finger.

The protein belongs to the HHV-1 ICP27 protein family. Interacts with host XPO1 and with the XPO1 export pathway components small GTPase RAN and nucleoporin NUP214. Interacts with host SPEN, OTT1 and OTT3. Interacts with host SRSF1, SRSF3, SRSF7 and SRPK1. Interacts with host DHX9; this interaction may have an inhibitory effect on virion production. Interacts (via N-terminus) with host NXF1; this interaction plays a role in mRNA export. Phosphorylated by cellular protein kinase CK2.

The protein resides in the host nucleus. The protein localises to the host cytoplasm. Promotes the nuclear export of a subset of early and late viral mRNAs by interacting with mRNAs and cellular export proteins. Additionally may prevent the establishment of cellular antiviral state, by acting as an alternative splicing factor for cellular RNAs such as STAT1, resulting in a STAT1 mRNA incapable of producing the STAT1alpha isoform. The protein is mRNA export factor ICP27 homolog of Homo sapiens (Human).